Reading from the N-terminus, the 453-residue chain is Aldehyde dehydrogenase, dimeric NADP-preferring (453 aa).

An N-acetylserine modification is found at serine 2. Lysine 178 carries the N6-acetyllysine modification. 188–193 provides a ligand contact to NAD(+); the sequence is GSTAVG. Lysine 194 carries the post-translational modification N6-acetyllysine. Catalysis depends on residues glutamate 210 and cysteine 244.

Belongs to the aldehyde dehydrogenase family. In terms of assembly, homodimer. Constitutively expressed in cornea, stomach, skin, bladder and lungs. Lowest expression levels in lungs and bladder.

The protein localises to the cytoplasm. It catalyses the reaction an aldehyde + NAD(+) + H2O = a carboxylate + NADH + 2 H(+). The catalysed reaction is octanal + NAD(+) + H2O = octanoate + NADH + 2 H(+). Its function is as follows. ALDHs play a major role in the detoxification of alcohol-derived acetaldehyde. They are involved in the metabolism of corticosteroids, biogenic amines, neurotransmitters, and lipid peroxidation. Oxidizes medium and long chain aldehydes into non-toxic fatty acids. Preferentially oxidizes aromatic aldehyde substrates. Comprises about 50 percent of corneal epithelial soluble proteins. May play a role in preventing corneal damage caused by ultraviolet light. The polypeptide is Aldehyde dehydrogenase, dimeric NADP-preferring (Aldh3a1) (Mus musculus (Mouse)).